The chain runs to 502 residues: ATP synthase subunit alpha (502 aa).

Residue Gly-169 to Thr-176 coordinates ATP.

It belongs to the ATPase alpha/beta chains family. As to quaternary structure, F-type ATPases have 2 components, CF(1) - the catalytic core - and CF(0) - the membrane proton channel. CF(1) has five subunits: alpha(3), beta(3), gamma(1), delta(1), epsilon(1). CF(0) has three main subunits: a(1), b(2) and c(9-12). The alpha and beta chains form an alternating ring which encloses part of the gamma chain. CF(1) is attached to CF(0) by a central stalk formed by the gamma and epsilon chains, while a peripheral stalk is formed by the delta and b chains.

The protein localises to the cell inner membrane. It catalyses the reaction ATP + H2O + 4 H(+)(in) = ADP + phosphate + 5 H(+)(out). Produces ATP from ADP in the presence of a proton gradient across the membrane. The alpha chain is a regulatory subunit. The chain is ATP synthase subunit alpha from Geotalea uraniireducens (strain Rf4) (Geobacter uraniireducens).